Reading from the N-terminus, the 629-residue chain is tRNA uridine 5-carboxymethylaminomethyl modification enzyme MnmG (629 aa).

FAD-binding positions include 18 to 23, Val-130, and Ser-188; that span reads GGGHAG. 280–294 serves as a coordination point for NAD(+); the sequence is GPRYCPSIEDKVVRF. Gln-377 lines the FAD pocket.

It belongs to the MnmG family. Homodimer. Heterotetramer of two MnmE and two MnmG subunits. FAD serves as cofactor.

Its subcellular location is the cytoplasm. Its function is as follows. NAD-binding protein involved in the addition of a carboxymethylaminomethyl (cmnm) group at the wobble position (U34) of certain tRNAs, forming tRNA-cmnm(5)s(2)U34. This is tRNA uridine 5-carboxymethylaminomethyl modification enzyme MnmG from Granulibacter bethesdensis (strain ATCC BAA-1260 / CGDNIH1).